The primary structure comprises 152 residues: MVKAVAVLGSSEGVTGTIFFTQEGNGPTTVTGSLAGLKPGLHGFHVHALGDTTNGCLSTGAHFNPNNNEHGAPEDENRHAGDLGNVNVGDDGTVSFSITDSQIPLTGPNSIIGRAVVVHADSDDLGKGGHELSKTTGNAGGRVACGIIGLQG.

Residues His45, His47, and His62 each contribute to the Cu cation site. Cys56 and Cys145 form a disulfide bridge. Zn(2+) is bound by residues His62, His70, His79, and Asp82. Residues 62–82 (HFNPNNNEHGAPEDENRHAGD) are disordered. Positions 71 to 81 (GAPEDENRHAG) are enriched in basic and acidic residues. His119 contributes to the Cu cation binding site.

It belongs to the Cu-Zn superoxide dismutase family. As to quaternary structure, homodimer. Requires Cu cation as cofactor. Zn(2+) serves as cofactor.

Its subcellular location is the cytoplasm. The enzyme catalyses 2 superoxide + 2 H(+) = H2O2 + O2. Functionally, destroys radicals which are normally produced within the cells and which are toxic to biological systems. The sequence is that of Superoxide dismutase [Cu-Zn] (SOD1) from Glycine max (Soybean).